We begin with the raw amino-acid sequence, 379 residues long: Early boundary activity protein 3 (379 aa).

As to quaternary structure, the heterotrimeric Elba complex consists of Elba1, Elba2 and Elba3.

It localises to the nucleus. In terms of biological role, the heterotrimeric Elba complex is required for chromatin domain boundary function during early embryogenesis. It binds to a 8-bp sequence 5'-CCAATAAG-3' in the Fab-7 insulator or boundary element in the bithorax complex and contributes to its insulator or boundary activity. Elba3 lacks DNA-binding activity and plays the role of an adapter protein, bringing Elba1 and 2 together, thereby establishing a complex that recognizes the asymmetric sequence motif through the BEN domains of Elba1 and 2. This is Early boundary activity protein 3 from Drosophila melanogaster (Fruit fly).